We begin with the raw amino-acid sequence, 182 residues long: Ribosome-recycling factor (182 aa).

This sequence belongs to the RRF family.

The protein localises to the cytoplasm. Its function is as follows. Responsible for the release of ribosomes from messenger RNA at the termination of protein biosynthesis. May increase the efficiency of translation by recycling ribosomes from one round of translation to another. This is Ribosome-recycling factor from Mycoplasma capricolum subsp. capricolum (strain California kid / ATCC 27343 / NCTC 10154).